We begin with the raw amino-acid sequence, 310 residues long: Ferredoxin--NADP reductase (310 aa).

The FAD site is built by Asp26, Gln34, Tyr39, Val78, Phe108, Asp268, and Thr308.

The protein belongs to the ferredoxin--NADP reductase type 2 family. In terms of assembly, homodimer. The cofactor is FAD.

It carries out the reaction 2 reduced [2Fe-2S]-[ferredoxin] + NADP(+) + H(+) = 2 oxidized [2Fe-2S]-[ferredoxin] + NADPH. The polypeptide is Ferredoxin--NADP reductase (Lactobacillus helveticus (strain DPC 4571)).